Consider the following 190-residue polypeptide: Recombination protein RecR (190 aa).

A C4-type zinc finger spans residues 58 to 73; it reads CEQCGALSENELCEIC. A Toprim domain is found at 81-167; that stretch reads NILCIVESPK…TFSKIAQGIP (87 aa).

This sequence belongs to the RecR family.

Its function is as follows. May play a role in DNA repair. It seems to be involved in an RecBC-independent recombinational process of DNA repair. It may act with RecF and RecO. This is Recombination protein RecR from Campylobacter jejuni subsp. doylei (strain ATCC BAA-1458 / RM4099 / 269.97).